The following is a 130-amino-acid chain: Chaperone protein SycT (130 aa).

As to quaternary structure, binds to YopT.

In terms of biological role, functions as a specific chaperone for YopT. The sequence is that of Chaperone protein SycT (sycT) from Yersinia enterocolitica.